Here is a 263-residue protein sequence, read N- to C-terminus: Thiamine thiazole synthase (263 aa).

NAD(+) contacts are provided by residues S43, 62 to 63 (ER), G70, V134, and 160 to 162 (HID). D162 and H177 together coordinate Fe cation. 2 residues coordinate NAD(+): S180 and M227. A glycine-binding site is contributed by R237.

This sequence belongs to the THI4 family. As to quaternary structure, homooctamer; tetramer of dimers. Requires Fe(2+) as cofactor.

It carries out the reaction hydrogen sulfide + glycine + NAD(+) = ADP-5-ethyl-4-methylthiazole-2-carboxylate + nicotinamide + 3 H2O + H(+). The protein operates within cofactor biosynthesis; thiamine diphosphate biosynthesis. Its function is as follows. Involved in the biosynthesis of the thiazole moiety of thiamine. Catalyzes the conversion of NAD and glycine to adenosine diphosphate 5-(2-hydroxyethyl)-4-methylthiazole-2-carboxylate (ADT), an adenylated thiazole intermediate, using free sulfide as a source of sulfur. The chain is Thiamine thiazole synthase from Methanococcus aeolicus (strain ATCC BAA-1280 / DSM 17508 / OCM 812 / Nankai-3).